A 188-amino-acid chain; its full sequence is Elongation factor P-like protein (188 aa).

This sequence belongs to the elongation factor P family.

The protein is Elongation factor P-like protein of Marinobacter nauticus (strain ATCC 700491 / DSM 11845 / VT8) (Marinobacter aquaeolei).